The chain runs to 128 residues: Glycine cleavage system H protein (128 aa).

One can recognise a Lipoyl-binding domain in the interval 23-105; that stretch reads VATVGISDHA…YEGGWLFKVQ (83 aa). An N6-lipoyllysine modification is found at Lys64.

The protein belongs to the GcvH family. In terms of assembly, the glycine cleavage system is composed of four proteins: P, T, L and H. (R)-lipoate serves as cofactor.

Functionally, the glycine cleavage system catalyzes the degradation of glycine. The H protein shuttles the methylamine group of glycine from the P protein to the T protein. The chain is Glycine cleavage system H protein from Alcanivorax borkumensis (strain ATCC 700651 / DSM 11573 / NCIMB 13689 / SK2).